Consider the following 113-residue polypeptide: Large ribosomal subunit protein bL17 (113 aa).

It belongs to the bacterial ribosomal protein bL17 family. In terms of assembly, part of the 50S ribosomal subunit. Contacts protein L32.

The chain is Large ribosomal subunit protein bL17 from Clostridium botulinum (strain Alaska E43 / Type E3).